Reading from the N-terminus, the 526-residue chain is Protein DETOXIFICATION 43 (526 aa).

Topologically, residues 1–36 are cytoplasmic; the sequence is MTETGDDLATVKKPIPFLVIFKDLRHVFSRDTTGRE. The helical transmembrane segment at 37–57 threads the bilayer; sequence ILGIAFPAALALAADPIASLI. At 58–59 the chain is on the extracellular side; it reads DT. A helical transmembrane segment spans residues 60-80; sequence AFVGRLGAVQLAAVGVSIAIF. At 81–170 the chain is on the cytoplasmic side; the sequence is NQASRITIFP…NKKEKRTIRT (90 aa). The segment at 133–166 is disordered; sequence ISSPTSNDTNQPQQPPAPDTKSNSGNKSNKKEKR. Polar residues predominate over residues 134 to 144; that stretch reads SSPTSNDTNQP. Residues 171–191 form a helical membrane-spanning segment; that stretch reads ASTAMILGLILGLVQAIFLIF. The Extracellular segment spans residues 192-215; that stretch reads SSKLLLGVMGVKPNSPMLSPAHKY. The helical transmembrane segment at 216–236 threads the bilayer; that stretch reads LSIRALGAPALLLSLAMQGIF. The Cytoplasmic segment spans residues 237–244; that stretch reads RGFKDTKT. The helical transmembrane segment at 245–267 threads the bilayer; the sequence is PLFATVVADVINIVLDPIFIFVL. The Extracellular segment spans residues 268-270; the sequence is RLG. A helical membrane pass occupies residues 271-293; the sequence is IIGAAIAHVISQYFMTLILFVFL. Over 294 to 316 the chain is Cytoplasmic; sequence AKKVNLIPPNFGDLQFGRFLKNG. A helical transmembrane segment spans residues 317–337; it reads LLLLARTIAVTFCQTLAAAMA. Residues 338 to 353 are Extracellular-facing; that stretch reads ARLGTTPMAAFQICLQ. Residues 354–374 form a helical membrane-spanning segment; sequence VWLTSSLLNDGLAVAGQAILA. Over 375 to 396 the chain is Cytoplasmic; that stretch reads CSFAEKDYNKVTAVASRVLQMG. The helical transmembrane segment at 397 to 417 threads the bilayer; the sequence is FVLGLGLSVFVGLGLYFGAGV. At 418-426 the chain is on the extracellular side; it reads FSKDPAVIH. The helical transmembrane segment at 427-447 threads the bilayer; sequence LMAIGIPFIAATQPINSLAFV. Residues 448–457 lie on the Cytoplasmic side of the membrane; the sequence is LDGVNFGASD. The helical transmembrane segment at 458 to 478 threads the bilayer; that stretch reads FAYTAYSMVGVAAISIAAVIY. Over 479–484 the chain is Extracellular; sequence MAKTNG. The chain crosses the membrane as a helical span at residues 485–505; the sequence is FIGIWIALTIYMALRAITGIA. The Cytoplasmic portion of the chain corresponds to 506-526; the sequence is RMATGTGPWRFLRGRSSSSSS.

Belongs to the multi antimicrobial extrusion (MATE) (TC 2.A.66.1) family. Expressed in roots in the pericycle and cells internal to the pericycle and surrounding the vascular tissue. Also expressed in seed and flower.

It localises to the cell membrane. In terms of biological role, citrate transporter responsible for loading citrate into xylem tissues, which helps facilitate iron transport to shoots. Mediates the citrate release in the apoplastic spaces during plant development allowing iron nutrition between symplastically disconnected tissues. This Arabidopsis thaliana (Mouse-ear cress) protein is Protein DETOXIFICATION 43.